We begin with the raw amino-acid sequence, 816 residues long: Neuroligin-4, Y-linked (816 aa).

The first 43 residues, 1 to 43 (MLRPQGLLWLPLLFTSVCVMLNSNVLLWITALAIKFTLIDSQA), serve as a signal peptide directing secretion. The Extracellular portion of the chain corresponds to 44 to 676 (QYPVVNTNYG…TKRDYSTELS (633 aa)). Asn-102 is a glycosylation site (N-linked (GlcNAc...) asparagine). 2 disulfide bridges follow: Cys-110–Cys-146 and Cys-306–Cys-317. The segment at 359–364 (QGEFLN) is interaction with NRXN1. A disulfide bridge links Cys-476 with Cys-510. An N-linked (GlcNAc...) asparagine glycan is attached at Asn-511. A disordered region spans residues 636 to 659 (TKRPAITPANNPKHSKDPHKTGPE). The span at 649–658 (HSKDPHKTGP) shows a compositional bias: basic and acidic residues. The helical transmembrane segment at 677–697 (VTIAVGASLLFLNILAFAALY) threads the bilayer. Residues 698–816 (YKKDKRRHET…LPHGHSTTRV (119 aa)) lie on the Cytoplasmic side of the membrane. Ser-712 carries the post-translational modification Phosphoserine.

The protein belongs to the type-B carboxylesterase/lipase family. Homodimer. Interacts with NRXN1 in a calcium-dependent manner. Interaction with neurexins is mediated by heparan sulfate glycan modification on neurexin. Interacts through its C-terminus with DLG4/PSD-95 third PDZ domain. In terms of tissue distribution, expressed in fetal and adult brain, prostate and testis.

It is found in the cell membrane. Its subcellular location is the postsynaptic density membrane. Functionally, cell surface protein involved in cell-cell-interactions via its interactions with neurexin family members. The chain is Neuroligin-4, Y-linked (NLGN4Y) from Homo sapiens (Human).